Here is a 266-residue protein sequence, read N- to C-terminus: Apolipoprotein A-I (266 aa).

A signal peptide spans 1-18 (MKAVVLTLAVLFLTGSQA). Repeat copies occupy residues 67 to 88 (LKLL…EQLG) and 89 to 110 (PVTQ…QEMN). The segment at 67-266 (LKLLDNWDSL…EEASKKLNAQ (200 aa)) is 10 X approximate tandem repeats. Position 109 is a methionine sulfoxide (Met-109). The stretch at 111-121 (KDVEEMKTKVQ) is one 3; half-length repeat. A run of 5 repeats spans residues 122–143 (PYLD…QKVE), 144–165 (PLGS…EKLS), 166–187 (PLGE…TQLA), 188–209 (PYSE…ESGG), and 210–231 (ASLA…EKAK). The 9; half-length repeat unit spans residues 232–242 (PALEDLRQGLL). Copy 10 of the repeat occupies 243–266 (PVLESFKVSLLSALEEASKKLNAQ).

It belongs to the apolipoprotein A1/A4/E family. In terms of assembly, homodimer. Interacts with APOA1BP and CLU. Component of a sperm activating protein complex (SPAP), consisting of APOA1, an immunoglobulin heavy chain, an immunoglobulin light chain and albumin. Interacts with NDRG1. Interacts with SCGB3A2. Interacts with NAXE and YJEFN3. Glycosylated. Post-translationally, palmitoylated. In terms of processing, phosphorylation sites are present in the extracellular medium. As to expression, major protein of plasma HDL, also found in chylomicrons.

The protein resides in the secreted. In terms of biological role, participates in the reverse transport of cholesterol from tissues to the liver for excretion by promoting cholesterol efflux from tissues and by acting as a cofactor for the lecithin cholesterol acyltransferase (LCAT). As part of the SPAP complex, activates spermatozoa motility. This chain is Apolipoprotein A-I (APOA1), found in Carlito syrichta (Philippine tarsier).